A 408-amino-acid chain; its full sequence is WD repeat-containing protein JIP5 (408 aa).

WD repeat units lie at residues 5-44 (PVGS…DSHN), 50-86 (PSKR…TTDI), 87-130 (DARS…SVKT), 133-172 (QHFD…PKVV), 177-216 (DQED…GDCV), and 221-267 (GHPL…FLGV). The disordered stretch occupies residues 311-408 (VDSDEEEDDE…VIDKDFFDGL (98 aa)). 2 stretches are compositionally biased toward acidic residues: residues 313–339 (SDEE…EDEE) and 356–366 (DESDDEDEEME). Residues 396 to 408 (KETVIDKDFFDGL) are compositionally biased toward basic and acidic residues.

The protein belongs to the WD repeat WDR55 family.

It localises to the nucleus. The protein localises to the nucleolus. The sequence is that of WD repeat-containing protein JIP5 (JIP5) from Coprinopsis cinerea (strain Okayama-7 / 130 / ATCC MYA-4618 / FGSC 9003) (Inky cap fungus).